We begin with the raw amino-acid sequence, 335 residues long: Calcium-binding protein TgpCaBP (335 aa).

The helical transmembrane segment at Leu-30–Ala-50 threads the bilayer. EF-hand domains follow at residues Met-113–Gln-148, Gln-153–Glu-188, Leu-190–Asn-225, and Val-227–His-262. The Ca(2+) site is built by Asp-126, Asp-128, Asp-130, Lys-132, Glu-137, Asp-166, Asp-168, Asp-170, Glu-177, Asp-203, Asn-205, Asp-207, Lys-209, Glu-214, Asp-240, Asn-242, Asp-244, and Glu-251. The short motif at His-332–Leu-335 is the Prevents secretion from ER element.

It localises to the endoplasmic reticulum membrane. It is found in the cytoplasm. The protein localises to the cytosol. In terms of biological role, calcium-binding protein. Participates in the efflux of intracellular Ca(2+) and storage of Ca(2+) in the endoplasmic reticulum. Required for gliding, host cell invasion and egress. Required for microneme secretion. The chain is Calcium-binding protein TgpCaBP from Toxoplasma gondii.